A 111-amino-acid chain; its full sequence is MFSSKIRDLRVERDLNQEEVANGIGVGKNTYLAYEKGTQSPKLETVEKLAKFYGVPIAELVSDSETNIDEKLKSKIRMIESLDEPEKESLFILMEALLMRSKSREIQKEFR.

One can recognise an HTH cro/C1-type domain in the interval 6–60 (IRDLRVERDLNQEEVANGIGVGKNTYLAYEKGTQSPKLETVEKLAKFYGVPIAEL). The H-T-H motif DNA-binding region spans 17–36 (QEEVANGIGVGKNTYLAYEK).

Its function is as follows. Transcriptional repressor of the integrated CTXPhi phage gene rstA2. This is Cryptic phage CTXphi transcriptional repressor RstR (rstR) from Vibrio cholerae.